A 426-amino-acid chain; its full sequence is Phytoene synthase 3, chloroplastic (426 aa).

Residues 1–52 (MMSTSRAVKSPACAARRRQWSADAPNRTATFLACRHGRRLGGGGGAPCSVRA) constitute a chloroplast transit peptide.

It belongs to the phytoene/squalene synthase family. In terms of tissue distribution, expressed in roots and endosperm.

The protein localises to the plastid. It localises to the chloroplast. Its subcellular location is the plastoglobule. The enzyme catalyses 2 (2E,6E,10E)-geranylgeranyl diphosphate = 15-cis-phytoene + 2 diphosphate. Functionally, catalyzes the conversion of geranylgeranyl diphosphate to phytoene. Mediates the first committed step in carotenoid biosynthesis. May play a role in regulating carotenoid flux in response to abiotic stress in roots. May control flux to carotenoid precursors that are required for abiotic stress-induced abscisic acid (ABA) formation in roots. In Zea mays (Maize), this protein is Phytoene synthase 3, chloroplastic.